Here is a 130-residue protein sequence, read N- to C-terminus: Ribosome-binding factor A (130 aa).

Belongs to the RbfA family. In terms of assembly, monomer. Binds 30S ribosomal subunits, but not 50S ribosomal subunits or 70S ribosomes.

The protein resides in the cytoplasm. Functionally, one of several proteins that assist in the late maturation steps of the functional core of the 30S ribosomal subunit. Associates with free 30S ribosomal subunits (but not with 30S subunits that are part of 70S ribosomes or polysomes). Required for efficient processing of 16S rRNA. May interact with the 5'-terminal helix region of 16S rRNA. This Prochlorococcus marinus (strain SARG / CCMP1375 / SS120) protein is Ribosome-binding factor A.